We begin with the raw amino-acid sequence, 415 residues long: Squalene synthase 1 (415 aa).

A run of 2 helical transmembrane segments spans residues 281–301 (AIFR…ALCF) and 391–411 (LIAI…SNLL).

The protein belongs to the phytoene/squalene synthase family. Requires Mg(2+) as cofactor. Mn(2+) serves as cofactor. As to expression, mostly expressed in the shoot apex (buds) and roots, and, to a lower extent, in stems, leaves, flowers and seeds.

It localises to the endoplasmic reticulum membrane. The catalysed reaction is 2 (2E,6E)-farnesyl diphosphate + NADH + H(+) = squalene + 2 diphosphate + NAD(+). It carries out the reaction 2 (2E,6E)-farnesyl diphosphate + NADPH + H(+) = squalene + 2 diphosphate + NADP(+). It participates in terpene metabolism; lanosterol biosynthesis; lanosterol from farnesyl diphosphate: step 1/3. In terms of biological role, component of the triterpene saponins (e.g. ginsenosides or panaxosides) and phytosterols biosynthetic pathways. Catalyzes the biosynthesis of squalene. This Panax ginseng (Korean ginseng) protein is Squalene synthase 1.